The sequence spans 391 residues: Chorismate synthase (391 aa).

2 residues coordinate NADP(+): Arg-39 and Arg-45. FMN-binding positions include 133-135, 254-255, Gly-299, 314-318, and Arg-340; these read RAS, QA, and KPIAT.

Belongs to the chorismate synthase family. In terms of assembly, homotetramer. FMNH2 serves as cofactor.

It carries out the reaction 5-O-(1-carboxyvinyl)-3-phosphoshikimate = chorismate + phosphate. Its pathway is metabolic intermediate biosynthesis; chorismate biosynthesis; chorismate from D-erythrose 4-phosphate and phosphoenolpyruvate: step 7/7. Functionally, catalyzes the anti-1,4-elimination of the C-3 phosphate and the C-6 proR hydrogen from 5-enolpyruvylshikimate-3-phosphate (EPSP) to yield chorismate, which is the branch point compound that serves as the starting substrate for the three terminal pathways of aromatic amino acid biosynthesis. This reaction introduces a second double bond into the aromatic ring system. This is Chorismate synthase from Symbiobacterium thermophilum (strain DSM 24528 / JCM 14929 / IAM 14863 / T).